Consider the following 88-residue polypeptide: Small ribosomal subunit protein bS16c (88 aa).

The protein belongs to the bacterial ribosomal protein bS16 family.

It localises to the plastid. Its subcellular location is the chloroplast. This is Small ribosomal subunit protein bS16c from Sinapis alba (White mustard).